A 169-amino-acid chain; its full sequence is NSSYRIISIGRGALGGDVYLGKSPNSDAPCPDGVFRYNSDVGPSGTPVRFIPLSGGIFEDQLLNIQFNIPTVKLCVSYTIWKVGNLNAYFRTMLLETGGTIGQADNSYFKIVKSSKIGYNLLSCPFTSIICLRCPEDQFCAKVGVVIQNGKRRLALVNENPLDVLFQEV.

A glycan (N-linked (GlcNAc...) asparagine) is linked at asparagine 1. 2 disulfides stabilise this stretch: cysteine 30/cysteine 75 and cysteine 124/cysteine 134.

The protein belongs to the protease inhibitor I3 (leguminous Kunitz-type inhibitor) family.

The protein resides in the vacuole. In terms of biological role, inhibitor of cathepsin D (aspartic protease). May also inhibit trypsin and chymotrypsin (serine proteases). Protects the plant by inhibiting proteases of invading organisms. The chain is Aspartic protease inhibitor 6 from Solanum tuberosum (Potato).